A 326-amino-acid polypeptide reads, in one-letter code: Beta-ketoacyl-[acyl-carrier-protein] synthase III (326 aa).

Catalysis depends on residues Cys-120 and His-253. The segment at 254–258 is ACP-binding; sequence QANIR. Residue Asn-283 is part of the active site.

Belongs to the thiolase-like superfamily. FabH family. In terms of assembly, homodimer.

Its subcellular location is the cytoplasm. It catalyses the reaction malonyl-[ACP] + acetyl-CoA + H(+) = 3-oxobutanoyl-[ACP] + CO2 + CoA. It functions in the pathway lipid metabolism; fatty acid biosynthesis. Catalyzes the condensation reaction of fatty acid synthesis by the addition to an acyl acceptor of two carbons from malonyl-ACP. Catalyzes the first condensation reaction which initiates fatty acid synthesis and may therefore play a role in governing the total rate of fatty acid production. Possesses both acetoacetyl-ACP synthase and acetyl transacylase activities. Its substrate specificity determines the biosynthesis of branched-chain and/or straight-chain of fatty acids. This Cupriavidus pinatubonensis (strain JMP 134 / LMG 1197) (Cupriavidus necator (strain JMP 134)) protein is Beta-ketoacyl-[acyl-carrier-protein] synthase III.